The following is a 415-amino-acid chain: Lipid-A-disaccharide synthase (415 aa).

Residues 1–21 form a disordered region; sequence MNSLPESGSDGQSSADPSQKA.

It belongs to the LpxB family.

The catalysed reaction is a lipid X + a UDP-2-N,3-O-bis[(3R)-3-hydroxyacyl]-alpha-D-glucosamine = a lipid A disaccharide + UDP + H(+). It participates in bacterial outer membrane biogenesis; LPS lipid A biosynthesis. In terms of biological role, condensation of UDP-2,3-diacylglucosamine and 2,3-diacylglucosamine-1-phosphate to form lipid A disaccharide, a precursor of lipid A, a phosphorylated glycolipid that anchors the lipopolysaccharide to the outer membrane of the cell. This chain is Lipid-A-disaccharide synthase, found in Gluconobacter oxydans (strain 621H) (Gluconobacter suboxydans).